The primary structure comprises 339 residues: Glycerol-3-phosphate dehydrogenase [NAD(P)+] (339 aa).

NADPH is bound by residues Ser15, Tyr16, His36, and Lys110. The sn-glycerol 3-phosphate site is built by Lys110, Gly139, and Thr141. Ala143 lines the NADPH pocket. 5 residues coordinate sn-glycerol 3-phosphate: Lys195, Asp248, Ser258, Arg259, and Asn260. Lys195 (proton acceptor) is an active-site residue. Arg259 serves as a coordination point for NADPH. Residues Val283 and Glu285 each contribute to the NADPH site.

The protein belongs to the NAD-dependent glycerol-3-phosphate dehydrogenase family.

The protein resides in the cytoplasm. It catalyses the reaction sn-glycerol 3-phosphate + NAD(+) = dihydroxyacetone phosphate + NADH + H(+). The catalysed reaction is sn-glycerol 3-phosphate + NADP(+) = dihydroxyacetone phosphate + NADPH + H(+). It functions in the pathway membrane lipid metabolism; glycerophospholipid metabolism. Catalyzes the reduction of the glycolytic intermediate dihydroxyacetone phosphate (DHAP) to sn-glycerol 3-phosphate (G3P), the key precursor for phospholipid synthesis. This Shigella dysenteriae serotype 1 (strain Sd197) protein is Glycerol-3-phosphate dehydrogenase [NAD(P)+].